The following is a 513-amino-acid chain: Type-2 serine--tRNA ligase (513 aa).

Position 312 (A312) interacts with L-serine. A Zn(2+)-binding site is contributed by C314. R344 is an L-serine binding site. ATP is bound by residues R344–E346 and R355–V356. Residue R361–E363 coordinates L-serine. The Zn(2+) site is built by E363 and C467. R474 serves as a coordination point for ATP.

Belongs to the class-II aminoacyl-tRNA synthetase family. Type-2 seryl-tRNA synthetase subfamily. As to quaternary structure, homodimer. It depends on Zn(2+) as a cofactor.

The protein localises to the cytoplasm. The enzyme catalyses tRNA(Ser) + L-serine + ATP = L-seryl-tRNA(Ser) + AMP + diphosphate + H(+). The catalysed reaction is tRNA(Sec) + L-serine + ATP = L-seryl-tRNA(Sec) + AMP + diphosphate + H(+). It functions in the pathway aminoacyl-tRNA biosynthesis; selenocysteinyl-tRNA(Sec) biosynthesis; L-seryl-tRNA(Sec) from L-serine and tRNA(Sec): step 1/1. Catalyzes the attachment of serine to tRNA(Ser). Is also able to aminoacylate tRNA(Sec) with serine, to form the misacylated tRNA L-seryl-tRNA(Sec), which will be further converted into selenocysteinyl-tRNA(Sec). This Methanothermobacter thermautotrophicus (strain ATCC 29096 / DSM 1053 / JCM 10044 / NBRC 100330 / Delta H) (Methanobacterium thermoautotrophicum) protein is Type-2 serine--tRNA ligase (serS).